The chain runs to 209 residues: Ribonuclease HII (209 aa).

Positions 20–209 (GLVAGVDEAG…VARSLPGACR (190 aa)) constitute an RNase H type-2 domain. A divalent metal cation is bound by residues Asp-26, Glu-27, and Asp-118.

This sequence belongs to the RNase HII family. Mn(2+) is required as a cofactor. It depends on Mg(2+) as a cofactor.

It localises to the cytoplasm. The catalysed reaction is Endonucleolytic cleavage to 5'-phosphomonoester.. Endonuclease that specifically degrades the RNA of RNA-DNA hybrids. In Verminephrobacter eiseniae (strain EF01-2), this protein is Ribonuclease HII.